The primary structure comprises 1399 residues: MADSHDAPFRLRSYQAEMVEESMQSNIICVMDTGSGKTHIAIDRTRAELEICRPDKIVWFLAPTVTLCEQQFAVFKSNLPGYGIQLLSGKDNLDHWTDQGVWDDVLLNIRIVLSTHQVLLDALSHGFVKMRNLSLLIFDEAHHCSLKHPAHRIMSDFYKPRIGTELPRILGLSASPIKTAKVTSEDLQQIERNLCATVKTPKLHRSELLRYVHRPHLMRIDYPVEPQDLQSNMLSFLKSAYTNYDLQKDPWVSELLQQRQQGHDVTKNIHKVFIGGKTYCRDQLRSLALKAEAMSQELGMSVMDWYLRGCITQFSKMVHMSDSQLLDWSADEKRHLLEILRTLPSIDLNSHDIPPMSLGSMSHKLQLLIKFLVAEAKHDPEFTCLVFVEQRVWVACIAEVLAIHPETRDLLRVGTFVGESENSKRKANIASISEPRNQQATLENFRAGKLNLILATSVLEEGIDVSSCHLVVCFESPKNLKSFVQRRGRARKEESKYVIFVPQAGRRRDPESWQSLEEGMKAAYLDDLRQVKLATEKEQQSETGHRNFEVKSTGALLTLDNASQHLHHFCSILGAGPYIDNRPQFEFTEIRPGVITARVILPLTVDPEVRTACALDTWATEKMAKQDAAFEAYKALYVAGLVNDNLLPARQEADDELSELQIPDHRPSLVPVSPTLDPWPLFARHQQQNPHVYYRTRLTLHTVDDKPKHLILLTPKILPDIPELLLYWNSSTKLKIESSWLHDVVLNDEEISELKSVTYKILYSVFHNRMELNRRDFVWLVAPCDESGLLDSRIWLSEWRQHTCLATELIAQNSDWSLWGLVNQKGDARKYTPRSTSMNNQLWLLQLMQLPKRRDFLHPVLESANINDAYTKTDEMAAKDCIVDPVPAPYSVFALLLPSILHRFGMAIIAETLRTTLLGPVALDSAHSLLLTRALKSSAADGNDNYQRLEFLGDCILKFIATVHLMAANPKWPESHLTAKKGRIVSNGFLARATIAAGLDRFMITKSFTGAKWAPRYAGDLLAETGPAVKEERSSKLIADIIESLIGACYTVGGFEKAVLCVQTLLPLEPWISVPAANSILHEAAPAEADLMGLDVLETLIGYTFKKKPLLLEALTHASFSGPHVHCSYERLEFLGDAVLDYIISKRLHAHSPELSHQKMHAIRTATVNASFLAFRLFETTIDEETINKTSMRPESQKRAIWQFLRSGSPSLNANRDNALRQHEQVRDEIIIGLNEAARFPWHLFALTDPPKFLSDMVESVIGAVYIDSLGDILTCEAIVRRLGILDCLDHILCNGVDCLHPKERLGHLAVDKGVQYARVGMNTEPNEGDKMYKCQVKVGGEDVGDVAEGLKRLNAETVAAWKAVGVLESRKDSAIEIVSDVEEFFDADDGGGISLDDP.

The Helicase ATP-binding domain maps to 18–194 (MVEESMQSNI…EDLQQIERNL (177 aa)). 31-38 (MDTGSGKT) provides a ligand contact to ATP. A DEAH box motif is present at residues 139-142 (DEAH). The region spanning 364-549 (KLQLLIKFLV…QSETGHRNFE (186 aa)) is the Helicase C-terminal domain. In terms of domain architecture, Dicer dsRNA-binding fold spans 562–656 (ASQHLHHFCS…LPARQEADDE (95 aa)). RNase III domains lie at 897-1054 (LPSI…TVGG) and 1094-1270 (LDVL…IDSL). Mg(2+) is bound by residues glutamate 1133, aspartate 1256, and glutamate 1259. Positions 1301–1370 (HPKERLGHLA…AWKAVGVLES (70 aa)) constitute a DRBM domain.

This sequence belongs to the helicase family. Dicer subfamily. Requires Mg(2+) as cofactor. The cofactor is Mn(2+).

Functionally, dicer-like endonuclease involved in cleaving double-stranded RNA in the RNA interference (RNAi) pathway. Produces 21 to 25 bp dsRNAs (siRNAs) which target the selective destruction of homologous RNAs leading to sequence-specific suppression of gene expression, called post-transcriptional gene silencing (PTGS). Part of a broad host defense response against viral infection and transposons. The polypeptide is Dicer-like protein 2 (DCL2) (Phaeosphaeria nodorum (strain SN15 / ATCC MYA-4574 / FGSC 10173) (Glume blotch fungus)).